A 1659-amino-acid polypeptide reads, in one-letter code: MSASVICVDLSSESDEESPAKRRRLEDPLRLLTPSGRQSFPAKLLNIPKASLGSAMVVPVAETGPARETPVIVDPLRSMHIPSGITITKHQKNVLATNGNMNLSLAESNNNNNTTSLNKNVTPKQINVGTGQKVAWSVSSKAPSPNAVITTVPSHQVRVTPFNPIRLAPGSKIIPASNAMPAKIQPILGMGQPQQQAQAQQPKAIIVGFPKPNTAVAQMAQHQKPLTLQIHQKLIAGQQQHIASISQLQQVSLQQQQPLRPVSIQLQQQQNQRNGSLPGKQQKPLECPVPAQQEKLPRGPLPTKPAEPLSGPLPTEPDEPLGGPLPTRPKPPVRSLQQPVNKNTAIGVQIQQSQEPLGGTLPTRQKPLGGQLLTQQKPPVGSIQQSVKQNTGIGVQIQQIPKVVVGQQPQKVYLNKLQQEQQKIFLGHLQQQQQKTFLGQLQQEQQKILGQLQQQKQQQQQQQKKILGQSQQQKVPLGQPQPQQKLPQQLNNSLVQLQQQHQQRTSVGQLQQQQPHQSQQKNSMVHVKQQPQQQKKISVGQFQQQPQQQQKTSVAQLQQQPQQQQKISVGQLQQQSQQQQKPSVGQLQQQSQQQQTPLVGQLQRQTQQQQKTSAGQFQQQPQQQQKISAGQLQEHSQQQQKTLAGQLQQQAQQQLNTSAGQLQQQQKPPKASLAQQAAAQKQGAGLGQQQQFQSQPQQRTSAGLLQQQQMPQKKIVMQPQLPKTSVVLPRPQQLPKNPLLVAQQQSPKTPLVNSVMGPQFPSQQPSLPVVNQITHKSMTIQRLPMLQTVQKILPKQIAPQQTPPPAHIVQKQTMPNAAMQNPPFAHRPPIVRPMTVAKISPVPTNNKVCIPMKPQMASYVSPTDPTMTAARTLPFRSSQRKTSEAPMTSTHVQGFTASATPPQRLLATPPHCAAALNEPLLLNLPPTTSITPQLTPTTTPPPAGPSAAVQQQQLAKAAAIKLNSLPEASISPVNRSPTASAKRIQPITVLKKSDEEWQRHLEQQQQKKHVQLQSSSMTTIVLVESPPTTPPTDKPEPERGPMTVEKSSIKPMATDKQSRAIKRPAVMISTKKSGLVVTEIVDLDEIPDIPPEKRGKECFPPIKNAAKAAPSVNAPFTTEYAALLRLCREVDKSTHMERLVKGELTQYYYSAPESFVMSCGFRNLVTMAMARIRSESYLVYVHLKYVLDELASRRLTKMFPTVRAIPPASQFPLPPASQFPLPPTLTTPKQPAIVKAPGQQTVMAGREQDDEVEEVTLVNVGTVSCEERRRDERIRHFYRTLHAITKRIKMLEEAEVDLNDEDSSYLQLERFKKRACQIYEKICDLKGESKSVRRQLKKPIHFKDSDYPHFNNSLSAFVNRMQDFPDYHDVLQILEKCNKEKELGLAKYEMKRIAYDAFNKVGRMLQSRRKNDLYETVTHYTANGKDPASSDPELLAKLKENNKKQTKISDILEKYALEQDLNAEERQEARLKEKKLKQVKADEEAAKLAALAEDDDKPCTSAQAAAKAAALAALKRGPAARGNVIRKKRAANGRIFKIADDGDDSEEESDSEDDDVEEFVNNFQANSDVSDADSEVEAVTSPKRDALPLAEEEDVIDITRDETGKKNDEGTPNGRLKIMSVSSLNANFVHGQDLHRKPNPMPSAKPVIADQIIISDEES.

Disordered stretches follow at residues 1–25 (MSASVICVDLSSESDEESPAKRRRL) and 265–336 (QLQQ…VRSL). The stretch at 438–469 (LGQLQQEQQKILGQLQQQKQQQQQQQKKILGQ) forms a coiled coil. 3 stretches are compositionally biased toward low complexity: residues 506-520 (SVGQLQQQQPHQSQQ), 528-542 (KQQPQQQKKISVGQF), and 600-625 (GQLQRQTQQQQKTSAGQFQQQPQQQQ). 7 disordered regions span residues 506-542 (SVGQLQQQQPHQSQQKNSMVHVKQQPQQQKKISVGQF), 600-645 (GQLQ…TLAG), 658-713 (SAGQ…MPQK), 872-894 (TLPFRSSQRKTSEAPMTSTHVQG), 924-952 (LPPTTSITPQLTPTTTPPPAGPSAAVQQQ), 1023-1060 (VESPPTTPPTDKPEPERGPMTVEKSSIKPMATDKQSRA), and 1536-1555 (FKIADDGDDSEEESDSEDDD). Residues 626-635 (KISAGQLQEH) show a composition bias toward polar residues. 2 stretches are compositionally biased toward low complexity: residues 636–645 (SQQQQKTLAG) and 658–698 (SAGQ…QPQQ). Composition is skewed to polar residues over residues 699–711 (RTSAGLLQQQQMP) and 885–894 (APMTSTHVQG). The tract at residues 870–1659 (ARTLPFRSSQ…DQIIISDEES (790 aa)) is necessary for interaction with His3.3A and His3.3B. Low complexity predominate over residues 924–937 (LPPTTSITPQLTPT). Over residues 1541–1555 (DGDDSEEESDSEDDD) the composition is skewed to acidic residues.

Interacts with p53 (via C-terminus). Interacts (via C-terminus) with His3.3A and His3.3B. Interacts with asf1. In terms of tissue distribution, ubiquitously expressed with higher levels in the head (at protein level). Expressed in the germ line, with prominent expression in primary spermatocytes and meiotic spermatocytes (at protein level). In ovaries, expressed in nurse cells and in the germinal vesicle of the ovarian follicle at stage 10 (at protein level).

The protein resides in the cytoplasm. The protein localises to the cytosol. It is found in the nucleus. It localises to the chromosome. Its function is as follows. Transcription regulator. Acts as a histone chaperone that facilitates deposition of histone H3.3. Has a role in chromatin remodeling together with asf1 and XNP. Has role in the transcriptional apoptotic response to oxidative and UV stress. This chain is Daxx-like protein, found in Drosophila melanogaster (Fruit fly).